The primary structure comprises 406 residues: Multifunctional CCA protein (406 aa).

The ATP site is built by G8 and R11. Residues G8 and R11 each contribute to the CTP site. Mg(2+) contacts are provided by D21 and D23. ATP is bound by residues R91, R138, and R141. CTP-binding residues include R91, R138, and R141. Residues T229–L331 enclose the HD domain.

Belongs to the tRNA nucleotidyltransferase/poly(A) polymerase family. Bacterial CCA-adding enzyme type 1 subfamily. Monomer. Can also form homodimers and oligomers. It depends on Mg(2+) as a cofactor. Requires Ni(2+) as cofactor.

It catalyses the reaction a tRNA precursor + 2 CTP + ATP = a tRNA with a 3' CCA end + 3 diphosphate. The catalysed reaction is a tRNA with a 3' CCA end + 2 CTP + ATP = a tRNA with a 3' CCACCA end + 3 diphosphate. Catalyzes the addition and repair of the essential 3'-terminal CCA sequence in tRNAs without using a nucleic acid template. Adds these three nucleotides in the order of C, C, and A to the tRNA nucleotide-73, using CTP and ATP as substrates and producing inorganic pyrophosphate. tRNA 3'-terminal CCA addition is required both for tRNA processing and repair. Also involved in tRNA surveillance by mediating tandem CCA addition to generate a CCACCA at the 3' terminus of unstable tRNAs. While stable tRNAs receive only 3'-terminal CCA, unstable tRNAs are marked with CCACCA and rapidly degraded. The chain is Multifunctional CCA protein from Stenotrophomonas maltophilia (strain K279a).